The chain runs to 860 residues: Glucans biosynthesis glucosyltransferase H (860 aa).

The next 6 helical transmembrane spans lie at 146 to 166 (ILLI…KGIL), 200 to 220 (ILLL…TALM), 519 to 539 (VFLT…FLVL), 576 to 596 (LFST…ILIW), 610 to 630 (TVSM…RMLF), and 686 to 706 (FLWW…VSVI).

It belongs to the glycosyltransferase 2 family. OpgH subfamily.

The protein resides in the cell inner membrane. The protein operates within glycan metabolism; osmoregulated periplasmic glucan (OPG) biosynthesis. Its function is as follows. Involved in the biosynthesis of osmoregulated periplasmic glucans (OPGs). The chain is Glucans biosynthesis glucosyltransferase H from Pseudomonas savastanoi pv. phaseolicola (strain 1448A / Race 6) (Pseudomonas syringae pv. phaseolicola (strain 1448A / Race 6)).